The chain runs to 257 residues: Type III pantothenate kinase (257 aa).

Residue 6 to 13 (DCGNTNTV) coordinates ATP. 107–110 (GPDR) is a binding site for substrate. Asp-109 serves as the catalytic Proton acceptor. Residue Asp-129 participates in K(+) binding. Residue Thr-132 coordinates ATP. Thr-184 serves as a coordination point for substrate.

The protein belongs to the type III pantothenate kinase family. Homodimer. NH4(+) is required as a cofactor. K(+) serves as cofactor.

The protein resides in the cytoplasm. It carries out the reaction (R)-pantothenate + ATP = (R)-4'-phosphopantothenate + ADP + H(+). It participates in cofactor biosynthesis; coenzyme A biosynthesis; CoA from (R)-pantothenate: step 1/5. Its function is as follows. Catalyzes the phosphorylation of pantothenate (Pan), the first step in CoA biosynthesis. The protein is Type III pantothenate kinase of Roseobacter denitrificans (strain ATCC 33942 / OCh 114) (Erythrobacter sp. (strain OCh 114)).